We begin with the raw amino-acid sequence, 410 residues long: Platelet-activating factor acetylhydrolase IB subunit beta (410 aa).

The segment at Met-1 to Asp-38 is required for self-association and interaction with PAFAH1B2 and PAFAH1B3. Residues Met-1–Met-66 are interaction with NDE1. The segment at Met-1 to Tyr-102 is interaction with NDEL1. The LisH domain occupies Gln-7–Val-39. An N6-acetyllysine modification is found at Lys-53. A coiled-coil region spans residues Thr-56–Gly-82. The interval Gly-83–Arg-410 is interaction with dynein and dynactin. 7 WD repeats span residues Gly-106–Lys-147, Gly-148–Thr-187, Gly-190–Thr-229, Gly-232–Glu-271, Glu-274–Thr-333, Gly-336–Asn-377, and Ala-378–Arg-410. Residue Ser-109 is modified to Phosphoserine. Residues Tyr-367–Cys-409 form an interaction with DCX region. Residues Phe-388–Arg-410 form an interaction with NDEL1 region.

Belongs to the WD repeat LIS1/nudF family. As to quaternary structure, component of the cytosolic PAF-AH (I) heterotetrameric enzyme, which is composed of PAFAH1B1 (beta), PAFAH1B2 (alpha2) and PAFAH1B3 (alpha1) subunits. The catalytic activity of the enzyme resides in the alpha1 (PAFAH1B3) and alpha2 (PAFAH1B2) subunits, whereas the beta subunit (PAFAH1B1) has regulatory activity. Trimer formation is not essential for the catalytic activity. Interacts with the catalytic dimer of PAF-AH (I) heterotetrameric enzyme: interacts with PAFAH1B2 homodimer (alpha2/alpha2 homodimer), PAFAH1B3 homodimer (alpha1/alpha1 homodimer) and PAFAH1B2-PAFAH1B3 heterodimer (alpha2/alpha1 heterodimer). Interacts with IQGAP1, KATNB1 and NUDC. Interacts with DAB1 when DAB1 is phosphorylated in response to RELN/reelin signaling. Can self-associate. Interacts with DCX, dynein, dynactin, NDE1, NDEL1 and RSN. Interacts with DISC1, and this interaction is enhanced by NDEL1. Interacts with INTS13. Interacts with DCDC1. As to expression, fairly ubiquitous expression in both the frontal and occipital areas of the brain.

It is found in the cytoplasm. It localises to the cytoskeleton. Its subcellular location is the microtubule organizing center. The protein localises to the centrosome. The protein resides in the spindle. It is found in the nucleus membrane. In terms of biological role, regulatory subunit (beta subunit) of the cytosolic type I platelet-activating factor (PAF) acetylhydrolase (PAF-AH (I)), an enzyme that catalyzes the hydrolyze of the acetyl group at the sn-2 position of PAF and its analogs and participates in PAF inactivation. Regulates the PAF-AH (I) activity in a catalytic dimer composition-dependent manner. Required for proper activation of Rho GTPases and actin polymerization at the leading edge of locomoting cerebellar neurons and postmigratory hippocampal neurons in response to calcium influx triggered via NMDA receptors. Positively regulates the activity of the minus-end directed microtubule motor protein dynein. May enhance dynein-mediated microtubule sliding by targeting dynein to the microtubule plus end. Required for several dynein- and microtubule-dependent processes such as the maintenance of Golgi integrity, the peripheral transport of microtubule fragments and the coupling of the nucleus and centrosome. Required during brain development for the proliferation of neuronal precursors and the migration of newly formed neurons from the ventricular/subventricular zone toward the cortical plate. Neuronal migration involves a process called nucleokinesis, whereby migrating cells extend an anterior process into which the nucleus subsequently translocates. During nucleokinesis dynein at the nuclear surface may translocate the nucleus towards the centrosome by exerting force on centrosomal microtubules. May also play a role in other forms of cell locomotion including the migration of fibroblasts during wound healing. Required for dynein recruitment to microtubule plus ends and BICD2-bound cargos. May modulate the Reelin pathway through interaction of the PAF-AH (I) catalytic dimer with VLDLR. The sequence is that of Platelet-activating factor acetylhydrolase IB subunit beta from Homo sapiens (Human).